A 290-amino-acid polypeptide reads, in one-letter code: Phosphatidylglycerol--prolipoprotein diacylglyceryl transferase (290 aa).

Transmembrane regions (helical) follow at residues 21-41, 60-80, 98-118, 124-144, 198-218, 224-244, and 258-278; these read VSLH…MWLA, LLYA…VLFY, GGMS…WFAH, FFQV…AGRL, SQLY…NLFI, IGSV…LVEF, and VISM…IMMA. R143 is a binding site for a 1,2-diacyl-sn-glycero-3-phospho-(1'-sn-glycerol).

It belongs to the Lgt family.

It localises to the cell inner membrane. The catalysed reaction is L-cysteinyl-[prolipoprotein] + a 1,2-diacyl-sn-glycero-3-phospho-(1'-sn-glycerol) = an S-1,2-diacyl-sn-glyceryl-L-cysteinyl-[prolipoprotein] + sn-glycerol 1-phosphate + H(+). Its pathway is protein modification; lipoprotein biosynthesis (diacylglyceryl transfer). Its function is as follows. Catalyzes the transfer of the diacylglyceryl group from phosphatidylglycerol to the sulfhydryl group of the N-terminal cysteine of a prolipoprotein, the first step in the formation of mature lipoproteins. This Sodalis glossinidius (strain morsitans) protein is Phosphatidylglycerol--prolipoprotein diacylglyceryl transferase.